Reading from the N-terminus, the 328-residue chain is MNDKWYRHIIGARTIKTGLATFFTSLFCMLLNLTPIFAILTAIVTIEPTAKASLKKGYKRLPATVIGALFAVVFTYVFGDQSPLSYALSATFTILICTKLNLQVGTTVAVLTSVAMIPGIHEAYVFNFFSRLLTALIGLVTAGLVNFIILPPKYYHQLEEQLALSEKKMYRLFYERCNELLLGKFSSEKTSKELSKLNIIAQKVETLMSYQRDELHYHKNEDNWKLLNRLTNRAYNNRLFISHLSNIIYLPKHTSIAFDANEKIALINISNSINGIIQKGSFARQKKSIATLKSSVKQMDEFDQNQMKSTLIYEILLIYKILDSRYAK.

Transmembrane regions (helical) follow at residues 26–46 (LFCM…IVTI), 61–81 (LPAT…FGDQ), 109–129 (AVLT…FNFF), and 132–152 (LLTA…ILPP).

The protein belongs to the UPF0421 family.

It localises to the cell membrane. The chain is UPF0421 protein SERP1427 from Staphylococcus epidermidis (strain ATCC 35984 / DSM 28319 / BCRC 17069 / CCUG 31568 / BM 3577 / RP62A).